A 156-amino-acid chain; its full sequence is Ribosomal RNA large subunit methyltransferase H (156 aa).

S-adenosyl-L-methionine-binding positions include Leu73, Gly104, and 123–128 (LSSLTL).

Belongs to the RNA methyltransferase RlmH family. Homodimer.

The protein resides in the cytoplasm. The catalysed reaction is pseudouridine(1915) in 23S rRNA + S-adenosyl-L-methionine = N(3)-methylpseudouridine(1915) in 23S rRNA + S-adenosyl-L-homocysteine + H(+). Functionally, specifically methylates the pseudouridine at position 1915 (m3Psi1915) in 23S rRNA. The sequence is that of Ribosomal RNA large subunit methyltransferase H from Neisseria meningitidis serogroup C / serotype 2a (strain ATCC 700532 / DSM 15464 / FAM18).